The following is a 676-amino-acid chain: Ribonuclease R (676 aa).

Residues 207–527 (RKDLRDLLCF…LIVHRLLFNP (321 aa)) enclose the RNB domain. The S1 motif domain maps to 566-651 (NKFLQEQPKT…LTQKIVWSIA (86 aa)). The segment at 656 to 676 (DKPKKIKKTPSKKKGTKKRAS) is disordered. The span at 659–676 (KKIKKTPSKKKGTKKRAS) shows a compositional bias: basic residues.

Belongs to the RNR ribonuclease family. RNase R subfamily.

It is found in the cytoplasm. The catalysed reaction is Exonucleolytic cleavage in the 3'- to 5'-direction to yield nucleoside 5'-phosphates.. Its function is as follows. 3'-5' exoribonuclease that releases 5'-nucleoside monophosphates and is involved in maturation of structured RNAs. The polypeptide is Ribonuclease R (Chlamydia pneumoniae (Chlamydophila pneumoniae)).